The following is a 401-amino-acid chain: MALRVTRNRLASARAELGGKTCSVAGPTQKPRAALGEIGNVAVINKDVTKKNVKTEVAKKTKVPAKAEKIEQPKAAVVPVKPAPEVQVPAQPEPASPTPMETSGCEPADLCQAFSDVILNTAIRDVDADDYNNPLLCSEYVKDIYKYLRQLEVEQSVKPNYLEGQEVTGNMRALLIDWLVQVSLKFRLLQETMYMTVGIIDRFLQDHPVPKKQLQLVGVTAMFLASKYEEMYPPEISDFAYVTDKAYTTAQIRDMEMTILRVLKFQLGRPLPLQFLRRASKIYEVTAEQHTLAKYLLELSMVDYAMDHFPPSMVASAALALTLKVLDAGEWDVTLQHYMAYTADTLTPVMAHIAKNVVKVNNGQTKHMTIKGKYFTSKQMRIATIFQLKSSVVKDLATQIS.

It belongs to the cyclin family. Cyclin AB subfamily. As to quaternary structure, interacts with the CDK1 protein kinase to form a serine/threonine kinase holoenzyme complex also known as maturation promoting factor (MPF). The cyclin subunit imparts substrate specificity to the complex.

Essential for the control of the cell cycle at the G2/M (mitosis) transition. This is G2/mitotic-specific cyclin-B1 (ccnb1) from Oryzias luzonensis (Luzon ricefish).